A 404-amino-acid polypeptide reads, in one-letter code: Phosphopentomutase (404 aa).

6 residues coordinate Mn(2+): Asp-10, Asp-303, His-308, Asp-344, His-345, and His-356.

This sequence belongs to the phosphopentomutase family. Requires Mn(2+) as cofactor.

It is found in the cytoplasm. It catalyses the reaction 2-deoxy-alpha-D-ribose 1-phosphate = 2-deoxy-D-ribose 5-phosphate. The enzyme catalyses alpha-D-ribose 1-phosphate = D-ribose 5-phosphate. The protein operates within carbohydrate degradation; 2-deoxy-D-ribose 1-phosphate degradation; D-glyceraldehyde 3-phosphate and acetaldehyde from 2-deoxy-alpha-D-ribose 1-phosphate: step 1/2. Its function is as follows. Isomerase that catalyzes the conversion of deoxy-ribose 1-phosphate (dRib-1-P) and ribose 1-phosphate (Rib-1-P) to deoxy-ribose 5-phosphate (dRib-5-P) and ribose 5-phosphate (Rib-5-P), respectively. This chain is Phosphopentomutase, found in Shewanella sp. (strain MR-7).